The chain runs to 305 residues: UDP-3-O-acyl-N-acetylglucosamine deacetylase (305 aa).

His78, His237, and Asp241 together coordinate Zn(2+). Residue His264 is the Proton donor of the active site.

It belongs to the LpxC family. It depends on Zn(2+) as a cofactor.

It carries out the reaction a UDP-3-O-[(3R)-3-hydroxyacyl]-N-acetyl-alpha-D-glucosamine + H2O = a UDP-3-O-[(3R)-3-hydroxyacyl]-alpha-D-glucosamine + acetate. The protein operates within glycolipid biosynthesis; lipid IV(A) biosynthesis; lipid IV(A) from (3R)-3-hydroxytetradecanoyl-[acyl-carrier-protein] and UDP-N-acetyl-alpha-D-glucosamine: step 2/6. Catalyzes the hydrolysis of UDP-3-O-myristoyl-N-acetylglucosamine to form UDP-3-O-myristoylglucosamine and acetate, the committed step in lipid A biosynthesis. The protein is UDP-3-O-acyl-N-acetylglucosamine deacetylase of Burkholderia thailandensis (strain ATCC 700388 / DSM 13276 / CCUG 48851 / CIP 106301 / E264).